Reading from the N-terminus, the 403-residue chain is Large ribosomal subunit protein uL3 (403 aa).

Positions 1–38 are disordered; sequence MSHRKFSAPRHGSLGFLPRKRSSRHRGKVKSFPKDDSS. Ser-13 bears the Phosphoserine mark. Positions 18–31 are enriched in basic residues; the sequence is PRKRSSRHRGKVKS. Lys-39 participates in a covalent cross-link: Glycyl lysine isopeptide (Lys-Gly) (interchain with G-Cter in SUMO2). The residue at position 136 (Lys-136) is an N6-acetyllysine. Glycyl lysine isopeptide (Lys-Gly) (interchain with G-Cter in SUMO2) cross-links involve residues Lys-224 and Lys-226. His-245 carries the tele-methylhistidine modification. 2 positions are modified to N6-acetyllysine; alternate: Lys-286 and Lys-294. Residue Lys-286 forms a Glycyl lysine isopeptide (Lys-Gly) (interchain with G-Cter in SUMO2); alternate linkage. A Glycyl lysine isopeptide (Lys-Gly) (interchain with G-Cter in SUMO1); alternate cross-link involves residue Lys-294. At Ser-304 the chain carries Phosphoserine. Lys-366 carries the N6-acetyllysine; alternate modification. Lys-366 participates in a covalent cross-link: Glycyl lysine isopeptide (Lys-Gly) (interchain with G-Cter in SUMO2); alternate. Lys-373 is modified (N6-acetyllysine). Glycyl lysine isopeptide (Lys-Gly) (interchain with G-Cter in SUMO2) cross-links involve residues Lys-386, Lys-393, and Lys-399.

Belongs to the universal ribosomal protein uL3 family. As to quaternary structure, component of the large ribosomal subunit. Interacts with DHX33. In terms of processing, constitutively monomethylated at His-245 by METTL18. Methylation at His-245 regulates translation elongation by slowing ribosome traversal on tyrosine codons: slower elongation provides enough time for proper folding of synthesized proteins and prevents cellular aggregation of tyrosine-rich proteins It is not required for incorporation of RPL3 into ribosomes.

Its subcellular location is the nucleus. The protein localises to the nucleolus. It localises to the cytoplasm. In terms of biological role, component of the large ribosomal subunit. The ribosome is a large ribonucleoprotein complex responsible for the synthesis of proteins in the cell. The sequence is that of Large ribosomal subunit protein uL3 (RPL3) from Bos taurus (Bovine).